Consider the following 469-residue polypeptide: Abscisic acid 8'-hydroxylase CYP707A2 (469 aa).

Residues 3 to 23 traverse the membrane as a helical segment; that stretch reads FVSMLCLFTFISLTLLLIHSI. A heme-binding site is contributed by Cys414.

This sequence belongs to the cytochrome P450 family. It depends on heme as a cofactor. Expressed at low levels in fruit.

The protein resides in the membrane. It catalyses the reaction 2-cis-(+)-abscisate + reduced [NADPH--hemoprotein reductase] + O2 = (+)-8'-hydroxyabscisate + oxidized [NADPH--hemoprotein reductase] + H2O + H(+). It participates in plant hormone degradation; abscisic acid degradation. Negative regulator of fruit ripening involved in the oxidative degradation of abscisic acid (ABA). The protein is Abscisic acid 8'-hydroxylase CYP707A2 of Solanum lycopersicum (Tomato).